Here is a 593-residue protein sequence, read N- to C-terminus: Mitosis inducer protein kinase cdr1 (593 aa).

The 247-residue stretch at Trp-12–Leu-258 folds into the Protein kinase domain. ATP contacts are provided by residues Leu-18–Val-26 and Lys-41. The active-site Proton acceptor is Asp-128. The residue at position 550 (Ser-550) is a Phosphoserine.

The protein belongs to the protein kinase superfamily. CAMK Ser/Thr protein kinase family. NIM1 subfamily. In terms of assembly, interacts with msp1.

It carries out the reaction L-seryl-[protein] + ATP = O-phospho-L-seryl-[protein] + ADP + H(+). It catalyses the reaction L-threonyl-[protein] + ATP = O-phospho-L-threonyl-[protein] + ADP + H(+). This protein, a dose-dependent mitotic inducer, appears to function as a negative regulator of mitosis inhibitor wee1 by phosphorylating and inactivating it. In Schizosaccharomyces pombe (strain 972 / ATCC 24843) (Fission yeast), this protein is Mitosis inducer protein kinase cdr1 (cdr1).